We begin with the raw amino-acid sequence, 280 residues long: Checkpoint protein HUS1 (280 aa).

It belongs to the HUS1 family. As to quaternary structure, component of the toroidal 9-1-1 (RAD9-RAD1-HUS1) complex, composed of RAD9A, RAD1 and HUS1. The 9-1-1 complex associates with LIG1, POLB, FEN1, RAD17, HDAC1, RPA1 and RPA2. The 9-1-1 complex associates with the RAD17-RFC complex. HUS1 interacts with POLB, HDAC1, FEN1, PCNA and RAD9B. HUS1 does not interact with RAD17. Interacts with DNAJC7. Ubiquitous.

It is found in the nucleus. It localises to the cytoplasm. The protein resides in the cytosol. Functionally, component of the 9-1-1 cell-cycle checkpoint response complex that plays a major role in DNA repair. The 9-1-1 complex is recruited to DNA lesion upon damage by the RAD17-replication factor C (RFC) clamp loader complex. Acts then as a sliding clamp platform on DNA for several proteins involved in long-patch base excision repair (LP-BER). The 9-1-1 complex stimulates DNA polymerase beta (POLB) activity by increasing its affinity for the 3'-OH end of the primer-template and stabilizes POLB to those sites where LP-BER proceeds; endonuclease FEN1 cleavage activity on substrates with double, nick, or gap flaps of distinct sequences and lengths; and DNA ligase I (LIG1) on long-patch base excision repair substrates. The 9-1-1 complex is necessary for the recruitment of RHNO1 to sites of double-stranded breaks (DSB) occurring during the S phase. The protein is Checkpoint protein HUS1 (HUS1) of Homo sapiens (Human).